The sequence spans 1563 residues: Superkiller complex protein 3 (1563 aa).

Ser-2 carries the N-acetylserine modification. TPR repeat units lie at residues 6 to 39 (VKTALKSARDAIRNKEYKEALKHCKTVLKQEKNN), 40 to 73 (YNAWVFIGVAAAELEQPDQAQGAYKKAAELEPEQ), 157 to 196 (YELWRKLSQLLAENIEDQNNETQQMLLTAFENALDLADNI), 272 to 305 (GPGLIGLGIIALQDKKYEDAVRHLTEGLKESPVC), 307 to 339 (AGWCHLAEAQVKMHRPKEAILSCNQALKTIDNF), 386 to 419 (PGLLVLQGLACLNTGAVDKATKIMEDLVTSYPDL), 420 to 453 (AEAHALEGRVHFTKKDYVQAEVSFQRALEKDAEV), 455 to 492 (EYHYQLGLTYWFMGEETRKDKTKALTHFLKAARLDAHM), 493 to 527 (GKVFCYLGHYYRDVAGDRNRARGCYRKAFELDDND), 564 to 597 (KWAWLRRGLYHLKAGQHSQAVADLQAALRADPKD), 598 to 631 (CNCWESLGEAYLSRGGYTTALKSFMKASELNPDS), 632 to 665 (TYSVFKVAAIQQILGRYSEAIAQYQLIIKMKEDY), 633 to 665 (YSVFKVAAIQQILGRYSEAIAQYQLIIKMKEDY), 673 to 713 (GECH…RADV), 790 to 824 (VQHLAETGSSMSDLTELLEKSLHCLKKAVRLDSNN), 826 to 860 (LHWNALGVVACYRGVGNYALAQHCFIKSIQAEQIN), 861 to 894 (AAAWTNLGVLYLATENIEQAHEAFKMAQSLDPSY), 980 to 1013 (ASAFTMLGYLNEHLQLKKEAAEAYQRATTLLHSA), 1020 to 1053 (NVAVRNWGRLLCSIGDYDRAIQAFKSTPLVELED), 1055 to 1084 (IGFALALFMKGLYKESGSAYERALAVCKSE), 1325 to 1358 (KWSFSQVVTGLIDTGKTSEAESLCTQSLKSNPDQ), and 1399 to 1432 (VPAWQWLAQVYQSQGMMGAAEMCYRKSLQVASQQ).

The protein belongs to the SKI3 family. In terms of assembly, component of the SKI complex which consists of SKIC2, SKIC3 and SKIC8. Interacts with PAF1.

The protein localises to the cytoplasm. Its subcellular location is the nucleus. Component of the SKI complex, a multiprotein complex that assists the RNA-degrading exosome during the mRNA decay and quality-control pathways. The SKI complex catalyzes mRNA extraction from 80S ribosomal complexes in the 3'-5' direction and channels mRNA to the cytosolic exosome for degradation. SKI-mediated extraction of mRNA from stalled ribosomes allow binding of the Pelota-HBS1L complex and subsequent ribosome disassembly by ABCE1 for ribosome recycling. In the nucleus, the SKI complex associates with transcriptionally active genes in a manner dependent on PAF1 complex (PAF1C). The sequence is that of Superkiller complex protein 3 from Mus musculus (Mouse).